A 202-amino-acid polypeptide reads, in one-letter code: Dephospho-CoA kinase (202 aa).

The region spanning 4–201 is the DPCK domain; the sequence is VIGLTGGIAS…QKYLAMSKQN (198 aa). ATP is bound at residue 12 to 17; it reads ASGKTT.

The protein belongs to the CoaE family.

Its subcellular location is the cytoplasm. It catalyses the reaction 3'-dephospho-CoA + ATP = ADP + CoA + H(+). It participates in cofactor biosynthesis; coenzyme A biosynthesis; CoA from (R)-pantothenate: step 5/5. Functionally, catalyzes the phosphorylation of the 3'-hydroxyl group of dephosphocoenzyme A to form coenzyme A. The polypeptide is Dephospho-CoA kinase (Vibrio vulnificus (strain YJ016)).